Here is a 624-residue protein sequence, read N- to C-terminus: Glycosyltransferase AglD (624 aa).

The active site involves aspartate 201. Transmembrane regions (helical) follow at residues 260–280 (VTIVAGLLLTVLALALMTLYI), 285–305 (VISVLGDADPALVAAAAVIYV), 381–401 (LLTIAGLAGVVLVGLAATGGL), 427–447 (AAYVATGVGVVAILGVLGIAL), 496–518 (VGLTSLAIWTVDVVTAVVVLLAL), 532–552 (FFAVSVGNLAKVLPLSPGGVG), 556–576 (IAFTVFMAALAPVTPAAALAA), and 587–607 (VTIVGGVGSMLSLNVSLTTAV).

This sequence belongs to the glycosyltransferase 2 family.

Its subcellular location is the cell membrane. It functions in the pathway cell surface structure biogenesis; S-layer biogenesis. Functionally, involved in the assembly of a N-linked pentasaccharide that decorates the S-layer glycoprotein and flagellins. Catalyzes the addition of the mannose found at position 5 of the pentasaccharide to its own distinct dolichol phosphate carrier. The sequence is that of Glycosyltransferase AglD (aglD) from Haloferax volcanii (strain ATCC 29605 / DSM 3757 / JCM 8879 / NBRC 14742 / NCIMB 2012 / VKM B-1768 / DS2) (Halobacterium volcanii).